The sequence spans 683 residues: ATP-dependent zinc metalloprotease FtsH 2 (683 aa).

Over residues 1 to 12 the composition is skewed to polar residues; it reads MADQTSQNDNQN. The segment at 1–21 is disordered; that stretch reads MADQTSQNDNQNGSGLPGGGP. The Cytoplasmic portion of the chain corresponds to 1-28; that stretch reads MADQTSQNDNQNGSGLPGGGPSGTGRGR. A helical membrane pass occupies residues 29 to 49; the sequence is LIIWVIAGTLLALWAYSYWGM. Topologically, residues 50–136 are periplasmic; it reads GASGGERISY…VTKPESSFPW (87 aa). A helical transmembrane segment spans residues 137 to 157; sequence GLVIMGLLPVLLLFGVGYIFL. Residues 158-683 are Cytoplasmic-facing; that stretch reads RRMQSQGQGL…ASGSADASGS (526 aa). 228-235 is a binding site for ATP; it reads GPPGTGKT. H450 serves as a coordination point for Zn(2+). E451 is an active-site residue. 2 residues coordinate Zn(2+): H454 and D526. The tract at residues 627–683 is disordered; that stretch reads VNGDTDEIGHMPTTNGAAASEENGSADDHEPDEATVIEEDGESGEGRASGSADASGS. A compositionally biased stretch (acidic residues) spans 655 to 669; that stretch reads HEPDEATVIEEDGES. A compositionally biased stretch (low complexity) spans 672–683; that stretch reads GRASGSADASGS.

It in the central section; belongs to the AAA ATPase family. In the C-terminal section; belongs to the peptidase M41 family. As to quaternary structure, homohexamer. The cofactor is Zn(2+).

The protein localises to the cell inner membrane. Functionally, acts as a processive, ATP-dependent zinc metallopeptidase for both cytoplasmic and membrane proteins. Plays a role in the quality control of integral membrane proteins. The chain is ATP-dependent zinc metalloprotease FtsH 2 from Salinibacter ruber (strain M8).